A 315-amino-acid polypeptide reads, in one-letter code: 2-oxoglutarate and iron-dependent oxygenase domain-containing protein 3 (315 aa).

The tract at residues 1–31 is disordered; that stretch reads MAPQRRGPPRIPEGSSAAERRRATSTKKDRL. At 1–41 the chain is on the cytoplasmic side; the sequence is MAPQRRGPPRIPEGSSAAERRRATSTKKDRLPREAQRTWLR. The span at 18 to 31 shows a compositional bias: basic and acidic residues; sequence AERRRATSTKKDRL. The helical; Signal-anchor for type II membrane protein transmembrane segment at 42 to 62 threads the bilayer; the sequence is IVAFGVGLALVTCLLWSSVGI. Residues 63 to 315 lie on the Lumenal side of the membrane; sequence DDDVAEVVAR…DHGIEDPVLT (253 aa). The Fe2OG dioxygenase domain occupies 203 to 305; sequence KPTFFSRINS…AITIAFTCNP (103 aa). Asn211 carries an N-linked (GlcNAc...) asparagine glycan. Residues His226 and Asp228 each coordinate Fe cation. An N-linked (GlcNAc...) asparagine glycan is attached at Asn263. Residue His284 participates in Fe cation binding. Arg294 is an active-site residue. Arg294 provides a ligand contact to 2-oxoglutarate.

The protein belongs to the OGFOD3 family. The cofactor is Fe(2+). L-ascorbate is required as a cofactor.

It localises to the membrane. The protein is 2-oxoglutarate and iron-dependent oxygenase domain-containing protein 3 (Ogfod3) of Mus musculus (Mouse).